The chain runs to 512 residues: Alanine--glyoxylate aminotransferase 2, mitochondrial (512 aa).

Residues 1-39 (MSLAWRTLQKAFYLETSLRILQMRPSLSCASRIYVPKLT) constitute a mitochondrion transit peptide. Lys55 is subject to N6-acetyllysine. The residue at position 69 (Lys69) is an N6-acetyllysine; alternate. The residue at position 69 (Lys69) is an N6-succinyllysine; alternate. Position 82 is an N6-acetyllysine (Lys82). Lys260 carries the N6-acetyllysine; alternate modification. Lys260 is modified (N6-succinyllysine; alternate). Position 302 is an N6-succinyllysine (Lys302). Lys348 carries the post-translational modification N6-(pyridoxal phosphate)lysine. Lys415 and Lys418 each carry N6-acetyllysine; alternate. N6-succinyllysine; alternate occurs at positions 415 and 418. Lys452 bears the N6-acetyllysine mark.

The protein belongs to the class-III pyridoxal-phosphate-dependent aminotransferase family. Homotetramer. The cofactor is pyridoxal 5'-phosphate. In terms of tissue distribution, expressed in the liver, lung and kidney.

The protein resides in the mitochondrion. The enzyme catalyses glyoxylate + L-alanine = glycine + pyruvate. It catalyses the reaction (R)-3-amino-2-methylpropanoate + pyruvate = 2-methyl-3-oxopropanoate + L-alanine. It carries out the reaction 3-oxopropanoate + L-alanine = beta-alanine + pyruvate. The catalysed reaction is 2-oxobutanoate + L-alanine = (2S)-2-aminobutanoate + pyruvate. The enzyme catalyses N(omega),N(omega)-dimethyl-L-arginine + pyruvate = 5-(3,3-dimethylguanidino)-2-oxopentanoate + L-alanine. It catalyses the reaction N(omega),N('omega)-dimethyl-L-arginine + pyruvate = 5-(3,3'-dimethylguanidino)-2-oxopentanoate + L-alanine. It carries out the reaction N(omega),N(omega)-dimethyl-L-arginine + glyoxylate = 5-(3,3-dimethylguanidino)-2-oxopentanoate + glycine. The catalysed reaction is N(omega),N('omega)-dimethyl-L-arginine + glyoxylate = 5-(3,3'-dimethylguanidino)-2-oxopentanoate + glycine. The enzyme catalyses N(omega)-methyl-L-arginine + pyruvate = 5-(3-methylguanidino)-2-oxopentanoate + L-alanine. It catalyses the reaction N(omega)-methyl-L-arginine + glyoxylate = 5-(3-methylguanidino)-2-oxopentanoate + glycine. It carries out the reaction L-ornithine + pyruvate = 5-amino-2-oxopentanoate + L-alanine. The catalysed reaction is L-ornithine + glyoxylate = 5-amino-2-oxopentanoate + glycine. The enzyme catalyses (2S)-2-aminobutanoate + glyoxylate = 2-oxobutanoate + glycine. It catalyses the reaction N(omega),N(omega)-dimethyl-L-arginine + oxaloacetate = 5-(3,3-dimethylguanidino)-2-oxopentanoate + L-aspartate. It carries out the reaction oxaloacetate + L-alanine = L-aspartate + pyruvate. The catalysed reaction is N(omega),N(omega)-dimethyl-L-arginine + 2-oxobutanoate = 5-(3,3-dimethylguanidino)-2-oxopentanoate + (2S)-2-aminobutanoate. The enzyme catalyses 2-oxopentanoate + N(omega),N(omega)-dimethyl-L-arginine = 5-(3,3-dimethylguanidino)-2-oxopentanoate + L-2-aminopentanoate. It catalyses the reaction 2-oxohexanoate + N(omega),N(omega)-dimethyl-L-arginine = L-2-aminohexanoate + 5-(3,3-dimethylguanidino)-2-oxopentanoate. Inhibited by 5-fluorouracil and 6-fluorouracil. Inhibited by phenylhydrazine, hydroxylamine, l-amino-L-proline, para-chloromercuribenzoate and HgCl2. Its function is as follows. Multifunctional aminotransferase with a broad substrate specificity. Catalyzes the conversion of glyoxylate to glycine using alanine as the amino donor. Catalyzes metabolism of not L- but the D-isomer of D-beta-aminoisobutyric acid to generate 2-methyl-3-oxopropanoate and alanine. Catalyzes the transfer of the amino group from beta-alanine to pyruvate to yield L-alanine and 3-oxopropanoate. Can metabolize NG-monomethyl-L-arginine (NMMA), asymmetric NG,NG-dimethyl-L-arginine (ADMA) and symmetric NG,N'G-dimethyl-L-arginine (SDMA). ADMA is a potent inhibitor of nitric-oxide (NO) synthase, and this activity provides mechanism through which the kidney regulates blood pressure. This is Alanine--glyoxylate aminotransferase 2, mitochondrial (Agxt2) from Rattus norvegicus (Rat).